A 317-amino-acid polypeptide reads, in one-letter code: Protease HtpX homolog (317 aa).

2 helical membrane passes run 6-26 (TAILLAGLTALFMAVGFAIGG) and 28-48 (GGMMIAFVVASATNLFSYWNS). His-130 contributes to the Zn(2+) binding site. The active site involves Glu-131. His-134 contributes to the Zn(2+) binding site. A run of 2 helical transmembrane segments spans residues 145–165 (MTATIAGAISMLANFGLLFGG) and 173–193 (PFGAIGTILMVILAPLAAMLV). Residue Glu-202 coordinates Zn(2+). The tract at residues 283–317 (GGGGFAPGPAPAVRPPGGNPWGVDPGGGQRRGPWG) is disordered. Pro residues predominate over residues 290 to 300 (GPAPAVRPPGG). Residues 306-317 (DPGGGQRRGPWG) are compositionally biased toward gly residues.

This sequence belongs to the peptidase M48B family. Requires Zn(2+) as cofactor.

It localises to the cell inner membrane. The polypeptide is Protease HtpX homolog (Xanthobacter autotrophicus (strain ATCC BAA-1158 / Py2)).